Here is a 130-residue protein sequence, read N- to C-terminus: Fluoride-specific ion channel FluC (130 aa).

4 helical membrane-spanning segments follow: residues Phe-3–Gly-23, Leu-38–Ala-58, Phe-67–Leu-87, and Ile-102–Leu-122. The Na(+) site is built by Gly-77 and Thr-80.

This sequence belongs to the fluoride channel Fluc/FEX (TC 1.A.43) family.

The protein resides in the cell inner membrane. The catalysed reaction is fluoride(in) = fluoride(out). With respect to regulation, na(+) is not transported, but it plays an essential structural role and its presence is essential for fluoride channel function. In terms of biological role, fluoride-specific ion channel. Important for reducing fluoride concentration in the cell, thus reducing its toxicity. The protein is Fluoride-specific ion channel FluC of Helicobacter pylori (strain G27).